The sequence spans 749 residues: Transcription factor RFX3 (749 aa).

A DNA-binding region (RFX-type winged-helix) is located at residues histidine 183–proline 258. The disordered stretch occupies residues valine 663–leucine 699. Acidic residues predominate over residues serine 674–serine 688.

Belongs to the RFX family. In terms of assembly, heterodimer; heterodimerizes with RFX1 and RFX2, and RFX6.

Its subcellular location is the nucleus. In terms of biological role, transcription factor required for ciliogenesis and islet cell differentiation during endocrine pancreas development. Essential for the differentiation of nodal monocilia and left-right asymmetry specification during embryogenesis. Required for the biogenesis of motile cilia by governing growth and beating efficiency of motile cells. Also required for ciliated ependymal cell differentiation. Regulates the expression of genes involved in ciliary assembly (DYNC2LI1, FOXJ1 and BBS4) and genes involved in ciliary motility (DNAH11, DNAH9 and DNAH5). Together with RFX6, participates in the differentiation of 4 of the 5 islet cell types during endocrine pancreas development, with the exception of pancreatic PP (polypeptide-producing) cells. Regulates transcription by forming a heterodimer with another RFX protein and binding to the X-box in the promoter of target genes. Represses transcription of MAP1A in non-neuronal cells but not in neuronal cells. The protein is Transcription factor RFX3 (RFX3) of Macaca fascicularis (Crab-eating macaque).